The primary structure comprises 304 residues: Ribonuclease Z (304 aa).

Zn(2+) is bound by residues His-63, His-65, Asp-67, His-68, His-141, Asp-208, and His-266. Residue Asp-67 is the Proton acceptor of the active site.

Belongs to the RNase Z family. In terms of assembly, homodimer. Zn(2+) serves as cofactor.

It catalyses the reaction Endonucleolytic cleavage of RNA, removing extra 3' nucleotides from tRNA precursor, generating 3' termini of tRNAs. A 3'-hydroxy group is left at the tRNA terminus and a 5'-phosphoryl group is left at the trailer molecule.. In terms of biological role, zinc phosphodiesterase, which displays some tRNA 3'-processing endonuclease activity. Probably involved in tRNA maturation, by removing a 3'-trailer from precursor tRNA. This is Ribonuclease Z from Chlamydia trachomatis serovar L2 (strain ATCC VR-902B / DSM 19102 / 434/Bu).